A 191-amino-acid chain; its full sequence is Peptidyl-tRNA hydrolase (191 aa).

TRNA is bound at residue Tyr17. Catalysis depends on His22, which acts as the Proton acceptor. TRNA is bound by residues Tyr68, Asn70, and Asn116.

It belongs to the PTH family. Monomer.

The protein resides in the cytoplasm. It catalyses the reaction an N-acyl-L-alpha-aminoacyl-tRNA + H2O = an N-acyl-L-amino acid + a tRNA + H(+). Its function is as follows. Hydrolyzes ribosome-free peptidyl-tRNAs (with 1 or more amino acids incorporated), which drop off the ribosome during protein synthesis, or as a result of ribosome stalling. Functionally, catalyzes the release of premature peptidyl moieties from peptidyl-tRNA molecules trapped in stalled 50S ribosomal subunits, and thus maintains levels of free tRNAs and 50S ribosomes. This Francisella tularensis subsp. mediasiatica (strain FSC147) protein is Peptidyl-tRNA hydrolase.